The primary structure comprises 279 residues: Sulfur carrier protein FdhD (279 aa).

The active-site Cysteine persulfide intermediate is Cys-122.

It belongs to the FdhD family.

Its subcellular location is the cytoplasm. In terms of biological role, required for formate dehydrogenase (FDH) activity. Acts as a sulfur carrier protein that transfers sulfur from IscS to the molybdenum cofactor prior to its insertion into FDH. This is Sulfur carrier protein FdhD from Thermoplasma volcanium (strain ATCC 51530 / DSM 4299 / JCM 9571 / NBRC 15438 / GSS1).